The following is a 319-amino-acid chain: Acetyl-coenzyme A carboxylase carboxyl transferase subunit alpha (319 aa).

Positions 38 to 292 (ALDKKAETLL…GKAIEMMLKE (255 aa)) constitute a CoA carboxyltransferase C-terminal domain.

This sequence belongs to the AccA family. Acetyl-CoA carboxylase is a heterohexamer composed of biotin carboxyl carrier protein (AccB), biotin carboxylase (AccC) and two subunits each of ACCase subunit alpha (AccA) and ACCase subunit beta (AccD).

The protein localises to the cytoplasm. The catalysed reaction is N(6)-carboxybiotinyl-L-lysyl-[protein] + acetyl-CoA = N(6)-biotinyl-L-lysyl-[protein] + malonyl-CoA. Its pathway is lipid metabolism; malonyl-CoA biosynthesis; malonyl-CoA from acetyl-CoA: step 1/1. Its function is as follows. Component of the acetyl coenzyme A carboxylase (ACC) complex. First, biotin carboxylase catalyzes the carboxylation of biotin on its carrier protein (BCCP) and then the CO(2) group is transferred by the carboxyltransferase to acetyl-CoA to form malonyl-CoA. The chain is Acetyl-coenzyme A carboxylase carboxyl transferase subunit alpha from Cereibacter sphaeroides (strain ATCC 17029 / ATH 2.4.9) (Rhodobacter sphaeroides).